The sequence spans 254 residues: 3-dehydroquinate dehydratase (254 aa).

3-dehydroquinate-binding positions include 47 to 49 and R83; that span reads EWR. H144 functions as the Proton donor/acceptor in the catalytic mechanism. The active-site Schiff-base intermediate with substrate is the K171. Residues R214, S233, and Q237 each contribute to the 3-dehydroquinate site.

Belongs to the type-I 3-dehydroquinase family. Homodimer.

The enzyme catalyses 3-dehydroquinate = 3-dehydroshikimate + H2O. It participates in metabolic intermediate biosynthesis; chorismate biosynthesis; chorismate from D-erythrose 4-phosphate and phosphoenolpyruvate: step 3/7. In terms of biological role, involved in the third step of the chorismate pathway, which leads to the biosynthesis of aromatic amino acids. Catalyzes the cis-dehydration of 3-dehydroquinate (DHQ) and introduces the first double bond of the aromatic ring to yield 3-dehydroshikimate. The polypeptide is 3-dehydroquinate dehydratase (Bacillus licheniformis (strain ATCC 14580 / DSM 13 / JCM 2505 / CCUG 7422 / NBRC 12200 / NCIMB 9375 / NCTC 10341 / NRRL NRS-1264 / Gibson 46)).